A 559-amino-acid polypeptide reads, in one-letter code: Frizzled-1 (559 aa).

An N-terminal signal peptide occupies residues 1-35 (MKHSHLLQRCSAQLCTRGSSLILSLLLSVCLSVEG). Topologically, residues 36–239 (QYNGEKGISI…FAPEELNFAR (204 aa)) are extracellular. Residues 46–165 (PDHGYCQPIS…NGAGELCVGQ (120 aa)) form the FZ domain. 5 cysteine pairs are disulfide-bonded: Cys-51-Cys-112, Cys-59-Cys-105, Cys-96-Cys-133, Cys-122-Cys-162, and Cys-126-Cys-150. Asn-65 carries N-linked (GlcNAc...) asparagine glycosylation. Asn-166 is a glycosylation site (N-linked (GlcNAc...) asparagine). The helical transmembrane segment at 240–260 (IWIGIWSVLCCASTLFTVLTY) threads the bilayer. Over 261-273 (LVDMKRFSYPERP) the chain is Cytoplasmic. The chain crosses the membrane as a helical span at residues 274-294 (IIFLSGCYTMVAIAYIAGFLL). The Extracellular portion of the chain corresponds to 295–321 (EDKVVCNERFAEDGYKTVAQGTKKEGC). The helical transmembrane segment at 322–342 (TFLFMMLYFFSMASSIWWVIL) threads the bilayer. Topologically, residues 343-364 (SLTWFLAAGMKWGHEAIEANSQ) are cytoplasmic. The chain crosses the membrane as a helical span at residues 365–385 (YFHLAAWAVPAIKTITILAVG). Residues 386 to 408 (QVDGDTLSGVCFVGINNVDALRG) are Extracellular-facing. Residues 409-429 (FVLAPLFVYLFIGTSFLLAGF) form a helical membrane-spanning segment. At 430–455 (VSLFRIRTIMKHDGTKTEKLEKLMVR) the chain is on the cytoplasmic side. A helical transmembrane segment spans residues 456-476 (IGIFSVLYTVPATIVIACYFY). The Extracellular segment spans residues 477–513 (EQAFREQWEKSWISQSCKTYAIPCPSTGHPPMSPDFT). A helical membrane pass occupies residues 514 to 534 (VFMIKYLMTLIVGITSGFWIW). The Cytoplasmic segment spans residues 535–559 (SGKTLNSWRKFYTRLTNSKQGETTV). A Lys-Thr-X-X-X-Trp motif, mediates interaction with the PDZ domain of Dvl family members motif is present at residues 537 to 542 (KTLNSW). The PDZ-binding signature appears at 557 to 559 (TTV).

Belongs to the G-protein coupled receptor Fz/Smo family. In terms of assembly, interacts with wnt8. In the embryo, expressed in the heart, pronephros and otic vesicles.

Its subcellular location is the cell membrane. Receptor for Wnt proteins. Functions in the canonical Wnt/beta-catenin signaling pathway. The canonical Wnt/beta-catenin signaling pathway leads to the activation of disheveled proteins, inhibition of GSK-3 kinase, nuclear accumulation of beta-catenin and activation of Wnt target genes. A second signaling pathway involving PKC and calcium fluxes has been seen for some family members, but it is not yet clear if it represents a distinct pathway or if it can be integrated in the canonical pathway, as PKC seems to be required for Wnt-mediated inactivation of GSK-3 kinase. Both pathways seem to involve interactions with G-proteins. May be involved in transduction and intercellular transmission of polarity information during tissue morphogenesis and/or in differentiated tissues. The sequence is that of Frizzled-1 (fzd1) from Xenopus laevis (African clawed frog).